A 727-amino-acid chain; its full sequence is Catalase-peroxidase (727 aa).

A disordered region spans residues 1–26 (MSDEKKCPVTGRTSSQVAGSGTSNKD). Over residues 11-26 (GRTSSQVAGSGTSNKD) the composition is skewed to polar residues. The segment at residues 96-219 (WHSAGTYRIG…LAAVQMGLIY (124 aa)) is a cross-link (tryptophyl-tyrosyl-methioninium (Trp-Tyr) (with M-245)). H97 functions as the Proton acceptor in the catalytic mechanism. Residues 219–245 (YVNPEGPNGDPNAVASGKDVRETFARM) constitute a cross-link (tryptophyl-tyrosyl-methioninium (Tyr-Met) (with W-96)). H260 is a binding site for heme b. A compositionally biased stretch (basic and acidic residues) spans 346 to 362 (SDPEAKKAVPDAHDPSK). The tract at residues 346-365 (SDPEAKKAVPDAHDPSKTHP) is disordered.

Belongs to the peroxidase family. Peroxidase/catalase subfamily. As to quaternary structure, homodimer or homotetramer. The cofactor is heme b. Formation of the three residue Trp-Tyr-Met cross-link is important for the catalase, but not the peroxidase activity of the enzyme.

The catalysed reaction is H2O2 + AH2 = A + 2 H2O. It carries out the reaction 2 H2O2 = O2 + 2 H2O. Its function is as follows. Bifunctional enzyme with both catalase and broad-spectrum peroxidase activity. The polypeptide is Catalase-peroxidase (Maridesulfovibrio salexigens (strain ATCC 14822 / DSM 2638 / NCIMB 8403 / VKM B-1763) (Desulfovibrio salexigens)).